The sequence spans 481 residues: Squalene epoxidase erg1 (481 aa).

Residues 28-48 (HADVVIIGAGVLGCALAVALG) traverse the membrane as a helical segment. Residues 38–39 (VL), 58–59 (EA), arginine 66, and arginine 138 contribute to the FAD site. Residue asparagine 146 is glycosylated (N-linked (GlcNAc...) asparagine). The FAD site is built by aspartate 319 and methionine 332. The next 2 membrane-spanning stretches (helical) occupy residues 425 to 445 (KPSV…WVLL) and 452 to 472 (LFPV…VVIF).

Belongs to the squalene monooxygenase family. FAD is required as a cofactor.

It is found in the endoplasmic reticulum membrane. It localises to the microsome membrane. The catalysed reaction is squalene + reduced [NADPH--hemoprotein reductase] + O2 = (S)-2,3-epoxysqualene + oxidized [NADPH--hemoprotein reductase] + H2O + H(+). It participates in steroid metabolism; ergosterol biosynthesis. Its function is as follows. Squalene epoxidase; part of the third module of ergosterol biosynthesis pathway that includes the late steps of the pathway. Erg1 catalyzes the epoxidation of squalene into 2,3-epoxysqualene. The third module or late pathway involves the ergosterol synthesis itself through consecutive reactions that mainly occur in the endoplasmic reticulum (ER) membrane. Firstly, the squalene synthase erg9 catalyzes the condensation of 2 farnesyl pyrophosphate moieties to form squalene, which is the precursor of all steroids. Squalene synthase is crucial for balancing the incorporation of farnesyl diphosphate (FPP) into sterol and nonsterol isoprene synthesis. Secondly, squalene is converted into lanosterol by the consecutive action of the squalene epoxidase erg1 and the lanosterol synthase erg7. Then, the delta(24)-sterol C-methyltransferase erg6 methylates lanosterol at C-24 to produce eburicol. Eburicol is the substrate of the sterol 14-alpha demethylase encoded by cyp51A and cyp51B, to yield 4,4,24-trimethyl ergosta-8,14,24(28)-trienol. The C-14 reductase erg24 then reduces the C14=C15 double bond which leads to 4,4-dimethylfecosterol. A sequence of further demethylations at C-4, involving the C-4 demethylation complex containing the C-4 methylsterol oxidases erg25A or erg25B, the sterol-4-alpha-carboxylate 3-dehydrogenase erg26 and the 3-keto-steroid reductase erg27, leads to the production of fecosterol via 4-methylfecosterol. The C-8 sterol isomerase erg2 then catalyzes the reaction which results in unsaturation at C-7 in the B ring of sterols and thus converts fecosterol to episterol. The sterol-C5-desaturase erg3B then catalyzes the introduction of a C-5 double bond in the B ring to produce 5-dehydroepisterol. The 2 other sterol-C5-desaturases, erg3A and erg3C, seem to be less important in ergosterol biosynthesis. The C-22 sterol desaturase erg5 further converts 5-dehydroepisterol into ergosta-5,7,22,24(28)-tetraen-3beta-ol by forming the C-22(23) double bond in the sterol side chain. Finally, ergosta-5,7,22,24(28)-tetraen-3beta-ol is substrate of the C-24(28) sterol reductases erg4A and erg4B to produce ergosterol. Possible alternative sterol biosynthetic pathways might exist from fecosterol to ergosterol, depending on the activities of the erg3 isoforms. The sequence is that of Squalene epoxidase erg1 from Aspergillus fumigatus (strain ATCC MYA-4609 / CBS 101355 / FGSC A1100 / Af293) (Neosartorya fumigata).